Consider the following 785-residue polypeptide: MVVPSLKLQDLIEEIRGAKTQAQEREVIQKECAHIRASFRDGDPVHRHRQLAKLLYVHMLGYPAHFGQMECLKLIASSRFTDKRVGYLGAMLLLDERHDAHLLITNSIKNDLSQGIQPVQGLALCTLSTMGSAEMCRDLAPEVEKLLLQPSPYVRKKAILTAVHMIRKVPELSSVFLPPCAQLLHERHHGILLGTITLITELCERSPAALRHFRKVVPQLVHILRTLVTMGYSTEHSISGVSDPFLQVQILRLLRILGRNHEESSETMNDLLAQVATNTDTSRNAGNAVLFETVLTIMDIRSAAGLRVLAVNILGRFLLNSDRNIRYVALTSLLRLVQSDHSAVQRHRPTVVECLRETDASLSRRALELSLALVNSSNVRAMMQELQAFLESCPPDLRADCASGILLAAERFAPTKRWHIDTILHVLTTAGTHVRDDAVANLTQLIGGAQELHAYSVRRLYNALAEDISQQPLVQVAAWCIGEYGDLLLAGNCEEIEPLQVDEEEVLALLEKVLQSHMSLPATRGYALTALMKLSTRLCGDNNRIRQVVSIYGSCLDVELQQRAVEYDTLFRKYDHMRAAILEKMPLVERDGPQADEEAKESKEAAQLSEAAPVPTEPQASQLLDLLDLLDGASGDVQHPPHLDPSPGGALVHLLDLPCVPPPPAPIPDLKVFEREGVQLNLSFIRPPENPALLLITITATNFSEGDVTHFICQAAVPKSLQLQLQAPSGNTVPARGGLPITQLFRILNPNKAPLRLKLRLTYDHFHQSVQEIFEVNNLPVESWQ.

Residues 369–379 (LSLALVNSSNV) are essential for ubiquitin-binding. The segment at 592 to 617 (GPQADEEAKESKEAAQLSEAAPVPTE) is disordered. The region spanning 665–780 (APIPDLKVFE…QEIFEVNNLP (116 aa)) is the GAE domain.

The protein belongs to the adaptor complexes large subunit family. As to quaternary structure, may interact with AP1S1/Sigma1A-adaptin and AP1S2/Sigma1B-adaptin. Probably does not interact with APB1. Interacts (via GAE domain) with RABEP1, NECAP1, CLINT1 and AFTPH/aftiphilin. (Microbial infection) Interacts with HBV major surface antigen L. Interacts with HBV core protein C in a ubiquitin-dependent manner. Expressed in all but one (skeletal muscle) tissues examined.

Its subcellular location is the golgi apparatus membrane. The protein resides in the cytoplasmic vesicle membrane. It localises to the endosome membrane. In terms of biological role, may function in protein sorting in late endosomes or multivesucular bodies (MVBs). (Microbial infection) Involved in MVB-assisted maturation of hepatitis B virus (HBV). This chain is AP-1 complex subunit gamma-like 2 (AP1G2), found in Homo sapiens (Human).